We begin with the raw amino-acid sequence, 177 residues long: Ribosome rescue factor SmrB (177 aa).

The Smr domain maps to 98-173 (LDMHGMKQDE…GAGAILVLLS (76 aa)).

Belongs to the SmrB family. As to quaternary structure, associates with collided ribosomes, but not with correctly translating polysomes.

Functionally, acts as a ribosome collision sensor. Detects stalled/collided disomes (pairs of ribosomes where the leading ribosome is stalled and a second ribosome has collided with it) and endonucleolytically cleaves mRNA at the 5' boundary of the stalled ribosome. Stalled/collided disomes form a new interface (primarily via the 30S subunits) that binds SmrB. Cleaved mRNA becomes available for tmRNA ligation, leading to ribosomal subunit dissociation and rescue of stalled ribosomes. This is Ribosome rescue factor SmrB from Aliivibrio fischeri (strain ATCC 700601 / ES114) (Vibrio fischeri).